Reading from the N-terminus, the 411-residue chain is MELSQKEIGLDRSKDDNGLSSNDYVVLGIHYPIDSDDDKVVELANKRSNSAGGSIGMFQQFFNKVEEFDYHPGFLSDVISRIHFTYRTKFIPIARSDDGPSPLRINFLIGDNPFNAIENAIYNPNCFNTDIGWGCMIRTGQSLLANAIQIAILGREFRVNDGDVNEQERKIISWFMDTPDEPFSLHNFVKKGCELSSKKPGEWFGPAATSRSIQSLVEQFPDCGIDRCIVSVSSADIFKDEINDIFKNKRYSNILLLMGVKLGVDKVNEYYLKDIRKILESRYSVGISGGRPSSSLYFFGYQDDTLLYFDPHKPQPSTIESLLETCHTDNFDKINISDMDPSMLIGVLLQGEDDWQSWSNEVFDSKIINILNSRNDVTIAEDSMSLEETLEPPDNEYVDLGPMSQQLNGSP.

Cysteine 135 (nucleophile) is an active-site residue. Active-site residues include aspartate 310 and histidine 312. The interval leucine 390–proline 411 is disordered.

The protein belongs to the peptidase C54 family.

The protein localises to the cytoplasm. It localises to the nucleus. Its subcellular location is the preautophagosomal structure. It carries out the reaction [protein]-C-terminal L-amino acid-glycyl-phosphatidylethanolamide + H2O = [protein]-C-terminal L-amino acid-glycine + a 1,2-diacyl-sn-glycero-3-phosphoethanolamine. Cysteine protease that plays a key role in cytoplasm to vacuole transport (Cvt) and autophagy by mediating both proteolytic activation and delipidation of ATG8. Required for selective autophagic degradation of the nucleus (nucleophagy) as well as for mitophagy which contributes to regulate mitochondrial quantity and quality by eliminating the mitochondria to a basal level to fulfill cellular energy requirements and preventing excess ROS production. The protease activity is required for proteolytic activation of ATG8: cleaves the C-terminal amino acid of ATG8 to reveal a C-terminal glycine. ATG8 ubiquitin-like activity requires the exposure of the glycine at the C-terminus for its conjugation to phosphatidylethanolamine (PE) and its insertion to membranes, which is necessary for autophagy. The ATG8-PE conjugate mediates tethering between adjacent membranes and stimulates membrane hemifusion, leading to expansion of the autophagosomal membrane during autophagy. In addition to the protease activity, also catalyzes deconjugation of PE-conjugated forms of ATG8 during macroautophagy: ATG8 delipidation is required to release the protein from membranes, which facilitates multiple events during macroautophagy, and especially for efficient autophagosome biogenesis, the assembly of ATG9-containing tubulovesicular clusters into phagophores/autophagosomes, and for the disassembly of PAS-associated ATG components. ATG8 delipidation by ATG4 also recycles ATG8-PE generated on inappropriate membranes to maintain a reservoir of unlipidated ATG8 that is required for autophagosome formation at the PAS. The protein is Probable cysteine protease ATG4 (ATG4) of Vanderwaltozyma polyspora (strain ATCC 22028 / DSM 70294 / BCRC 21397 / CBS 2163 / NBRC 10782 / NRRL Y-8283 / UCD 57-17) (Kluyveromyces polysporus).